We begin with the raw amino-acid sequence, 688 residues long: MSNVTLRKMSPTGNEMKSTTQGTTRKQQDFHEVNKRRTFLQDNSWIKKRPEEEKDENYGRVVLNRHNSHDALDRKVNERDVPKATISRYSSDDTLDRISDRNDAAKTYKANTLDNQLTNRSMSMFRSLEVTKLQPGGSLNANTSNTIASTSATTPVKKKRQSWFPPPPPGYNASSSTGTRRREPGVHPPIPPKPSSPVSSPNQLRQDNRQIHPPKPGVYTETNRSAERNIRSQDLDNIVKVATSLQRSDKGEELDNLIKMNKSLNRNQGLDSLFRANPKVEEREKRAKSLESLIYMSTRTDKDGKGIQSLGSPIKVNQRTDKNEKGRQNLESVAKVNARMNKTSRRSEDLDNATEVNPKGHENTTGKKDLDGLIKVDPETNKNITRGQSLDNLIKVTPEVKRSNQGSKDLNNFIKVYPGTEKSTEGGQSLDSLIKVTPERNRTNQGNQDLENLIKVIPSANKSSEQGLDEHINVSPKAVKNTDGKQDLDKLIKVNPEIFTNNQRNQDLANLIKVNPAVIRNNQSQDLDNLIKVKPSALRNTNRDQNLENLIEVNSHVSENKNGSSNTGAKQAGPQDTVVYTRTYVENSKSPKDGYQENISGKYIQTVYSTSDRSVIERDMCTYCRKPLGVETKMILDELQICCHSTCFKCEICKQPLENLQAGDSIWIYRQTIHCEPCYSKIMAKWIP.

Residues methionine 1–arginine 25 show a composition bias toward polar residues. The disordered stretch occupies residues methionine 1–aspartate 29. N6-acetyllysine is present on lysine 83. Residues glutamine 134 to arginine 231 form a disordered region. Low complexity predominate over residues asparagine 140–threonine 154. Over residues valine 186–serine 195 the composition is skewed to pro residues. Repeat copies occupy residues glycine 251–arginine 266, asparagine 267–arginine 286, alanine 287–glycine 306, isoleucine 307–glycine 326, arginine 327–arginine 346, serine 347–glycine 366, lysine 367–arginine 386, glycine 387–glycine 406, serine 407–glycine 426, glycine 427–glycine 446, asparagine 447–glutamate 465, glutamine 466–glycine 484, lysine 485–arginine 504, asparagine 505–glutamine 523, serine 524–arginine 543, and aspartate 544–glycine 563. The segment at glycine 251–glycine 563 is 16 X approximate tandem repeats. The residue at position 289 (serine 289) is a Phosphoserine. A disordered region spans residues methionine 340–leucine 373. Positions proline 358–leucine 373 are enriched in basic and acidic residues. Position 389 is a phosphoserine (serine 389). The LIM zinc-binding domain maps to aspartate 619–lysine 685.

Highly expressed in esophagus. It is also expressed in keratinocytes, amniotic tissue, foreskin stratum spinosum and stratum granulosum, hair follicle and nail.

The protein localises to the cytoplasm. It localises to the membrane. May function in the assembly or regulation of proteins in the cornified envelope. The LIM domain may be involved in homotypic or heterotypic associations and may function to localize sciellin to the cornified envelope. The protein is Sciellin (SCEL) of Homo sapiens (Human).